The chain runs to 112 residues: Cuticle protein AM1239 (112 aa).

The Chitin-binding type R&amp;R domain maps to 16 to 85 (DGNFNYRFET…FIPTDHPLPA (70 aa)). An O-linked (HexNAc) threonine glycan is attached at T79.

As to expression, arthrodial membrane.

The protein is Cuticle protein AM1239 of Cancer pagurus (Rock crab).